A 72-amino-acid chain; its full sequence is Large ribosomal subunit protein bL31 (72 aa).

Residues Cys16, Cys18, Cys38, and Cys41 each coordinate Zn(2+).

The protein belongs to the bacterial ribosomal protein bL31 family. Type A subfamily. As to quaternary structure, part of the 50S ribosomal subunit. Zn(2+) is required as a cofactor.

In terms of biological role, binds the 23S rRNA. The sequence is that of Large ribosomal subunit protein bL31 from Aliivibrio fischeri (strain ATCC 700601 / ES114) (Vibrio fischeri).